Reading from the N-terminus, the 142-residue chain is DNA polymerase III subunit chi (142 aa).

Belongs to the DNA polymerase III chi/HolC chain family. As to quaternary structure, DNA polymerase III contains a core (composed of alpha, epsilon and theta chains) that associates with a tau subunit. This core dimerizes to form the POLIII' complex. PolIII' associates with the gamma complex (composed of gamma, delta, delta', psi and chi chains) and with the beta chain to form the complete DNA polymerase III complex. Interacts directly with the psi subunit (holD). The only subunit of the DNA polymerase III holoenzyme known to interact with single-stranded DNA binding protein (SSB).

It catalyses the reaction DNA(n) + a 2'-deoxyribonucleoside 5'-triphosphate = DNA(n+1) + diphosphate. Its function is as follows. Part of the beta sliding clamp loading complex, which hydrolyzes ATP to load the beta clamp onto primed DNA to form the DNA replication pre-initiation complex. DNA polymerase III is a complex, multichain enzyme responsible for most of the replicative synthesis in bacteria. This DNA polymerase also exhibits 3' to 5' exonuclease activity. This is DNA polymerase III subunit chi from Pseudomonas aeruginosa (strain ATCC 15692 / DSM 22644 / CIP 104116 / JCM 14847 / LMG 12228 / 1C / PRS 101 / PAO1).